A 169-amino-acid chain; its full sequence is Peptide methionine sulfoxide reductase MsrA 1 (169 aa).

The active site involves cysteine 12.

The protein belongs to the MsrA Met sulfoxide reductase family.

It catalyses the reaction L-methionyl-[protein] + [thioredoxin]-disulfide + H2O = L-methionyl-(S)-S-oxide-[protein] + [thioredoxin]-dithiol. The catalysed reaction is [thioredoxin]-disulfide + L-methionine + H2O = L-methionine (S)-S-oxide + [thioredoxin]-dithiol. Has an important function as a repair enzyme for proteins that have been inactivated by oxidation. Catalyzes the reversible oxidation-reduction of methionine sulfoxide in proteins to methionine. In Staphylococcus aureus (strain Mu50 / ATCC 700699), this protein is Peptide methionine sulfoxide reductase MsrA 1 (msrA1).